We begin with the raw amino-acid sequence, 260 residues long: Phosphonates import ATP-binding protein PhnC 2 (260 aa).

The region spanning 4 to 245 is the ABC transporter domain; the sequence is IQINKATKTY…KNTLRTIYQR (242 aa). 37-44 provides a ligand contact to ATP; the sequence is GPSGAGKS.

This sequence belongs to the ABC transporter superfamily. Phosphonates importer (TC 3.A.1.9.1) family. The complex is composed of two ATP-binding proteins (PhnC), two transmembrane proteins (PhnE) and a solute-binding protein (PhnD).

Its subcellular location is the cell inner membrane. It carries out the reaction phosphonate(out) + ATP + H2O = phosphonate(in) + ADP + phosphate + H(+). In terms of biological role, part of the ABC transporter complex PhnCDE involved in phosphonates import. Responsible for energy coupling to the transport system. The polypeptide is Phosphonates import ATP-binding protein PhnC 2 (Trichodesmium erythraeum (strain IMS101)).